Reading from the N-terminus, the 211-residue chain is UPF0637 protein ABC2405 (211 aa).

The protein belongs to the UPF0637 family.

In Shouchella clausii (strain KSM-K16) (Alkalihalobacillus clausii), this protein is UPF0637 protein ABC2405.